The sequence spans 587 residues: ATP-dependent lipid A-core flippase (587 aa).

5 helical membrane-spanning segments follow: residues 31–51 (LIAS…LIYL), 68–88 (LKIM…TNFI), 145–165 (GSLI…AVMF), 169–189 (WELT…ITIV), and 259–279 (VQII…TPLI). The ABC transmembrane type-1 domain occupies 32–315 (IASGIALVFN…LTNVNSQFQR (284 aa)). The 237-residue stretch at 347-583 (LEFKNVSFAY…NGAYKQLYSM (237 aa)) folds into the ABC transporter domain. 381 to 388 (GRSGSGKS) serves as a coordination point for ATP.

Belongs to the ABC transporter superfamily. Lipid exporter (TC 3.A.1.106) family. As to quaternary structure, homodimer.

It localises to the cell inner membrane. The catalysed reaction is ATP + H2O + lipid A-core oligosaccharideSide 1 = ADP + phosphate + lipid A-core oligosaccharideSide 2.. Involved in lipopolysaccharide (LPS) biosynthesis. Translocates lipid A-core from the inner to the outer leaflet of the inner membrane. Transmembrane domains (TMD) form a pore in the inner membrane and the ATP-binding domain (NBD) is responsible for energy generation. The sequence is that of ATP-dependent lipid A-core flippase from Haemophilus influenzae (strain 86-028NP).